Reading from the N-terminus, the 1203-residue chain is DNA-directed RNA polymerase I subunit RPA135 (1203 aa).

Ser2 carries the post-translational modification N-acetylserine. Ser81 bears the Phosphoserine mark. A C4-type zinc finger spans residues 1104-1131 (CRECGSILTTQQSVPRIGSISTVCCRRC). Ser1156 carries the phosphoserine modification.

It belongs to the RNA polymerase beta chain family. As to quaternary structure, component of the RNA polymerase I (Pol I) complex consisting of 14 subunits: RPA135, RPA190, RPC40, RPA14, RPB5, RPO26, RPA43, RPB8, RPA12, RPB10, RPC19, RPC10, RPA49 and RPA34. The complex is composed of a horseshoe-shaped core containing ten subunits (RPA135, RPA190, RPB5, RPO26, RPB8, RPB10, RPC10, RPA12, RPC19 and RPC40) where RPA135 and RPA190 form the DNA-binding cleft. Outside of the core, RPA14 and RPA43 form the stalk that mediates interactions with transcription initiation factors and newly synthesized RNA.

It is found in the nucleus. The protein localises to the nucleolus. The catalysed reaction is RNA(n) + a ribonucleoside 5'-triphosphate = RNA(n+1) + diphosphate. Functionally, DNA-dependent RNA polymerases catalyze the transcription of DNA into RNA using the four ribonucleoside triphosphates as substrates. Component of RNA polymerase I (Pol I) which synthesizes ribosomal RNA precursors. Besides, RNA polymerase I has intrinsic RNA cleavage activity. RPA190 and RPA135 both contribute to the polymerase catalytic activity and together form the Pol I active center. In addition, subunit RPA12 contributes a catalytic zinc ribbon that is required for RNA cleavage by Pol I. A single stranded DNA template strand of the promoter is positioned within the central active site cleft of Pol I. A bridging helix emanates from RPA190 and crosses the cleft near the catalytic site and is thought to promote translocation of Pol I by acting as a ratchet that moves the RNA-DNA hybrid through the active site by switching from straight to bent conformations at each step of nucleotide addition. The sequence is that of DNA-directed RNA polymerase I subunit RPA135 (RPA135) from Saccharomyces cerevisiae (strain ATCC 204508 / S288c) (Baker's yeast).